The chain runs to 711 residues: Tyrosine-protein phosphatase 2 (711 aa).

One can recognise a Rhodanese domain in the interval 21–130 (TESVSWIIDL…FASSHPDAIV (110 aa)). 2 disordered regions span residues 275 to 306 (APQQTPARPSLRSVPSYPSSNNQRRPSASRVR) and 329 to 376 (IIPR…RANK). Polar residues-rich tracts occupy residues 290-306 (SYPSSNNQRRPSASRVR) and 340-363 (NAQNDGTSTMTSKLKPSVGLSNTR). Positions 433-698 (EMTRSLAFND…KFLYDVVDYL (266 aa)) constitute a Tyrosine-protein phosphatase domain. Cys630 (phosphocysteine intermediate) is an active-site residue.

It belongs to the protein-tyrosine phosphatase family. Non-receptor class subfamily.

Its subcellular location is the cytoplasm. It carries out the reaction O-phospho-L-tyrosyl-[protein] + H2O = L-tyrosyl-[protein] + phosphate. Plays a role in inhibiting the onset of mitosis. Dephosphorylates sty1/spc1 and wis1/spc2/sty2. The protein is Tyrosine-protein phosphatase 2 (pyp2) of Schizosaccharomyces pombe (strain 972 / ATCC 24843) (Fission yeast).